We begin with the raw amino-acid sequence, 117 residues long: Prefoldin subunit beta (117 aa).

This sequence belongs to the prefoldin subunit beta family. Heterohexamer of two alpha and four beta subunits.

The protein localises to the cytoplasm. Molecular chaperone capable of stabilizing a range of proteins. Seems to fulfill an ATP-independent, HSP70-like function in archaeal de novo protein folding. This Pyrococcus abyssi (strain GE5 / Orsay) protein is Prefoldin subunit beta (pfdB).